A 391-amino-acid polypeptide reads, in one-letter code: Na(+)/H(+) antiporter NhaA (391 aa).

11 helical membrane passes run 14 to 34, 59 to 79, 95 to 115, 124 to 144, 154 to 174, 177 to 197, 213 to 233, 261 to 281, 292 to 312, 331 to 351, and 363 to 383; these read AGGILLMAAVILAMIMANSPL, LIHWINDGLMALFFMLIGLEV, SLPTFAAIGGMIFPAAIYLIF, VGWAIPAATDIAFALGIMALL, VFLLALAIIDDLGVVVIIAMF, TDLSAISLVVAALAIVILVGL, LILWIAVLKSGVHATLAGVII, FVILPIFAFANAGVDLSGMSL, IALGLLLGKPLGVLLFSFVAV, VAVMCGIGFTMSMFISSLAFI, and LGILTGSIMSAVIGYFWLSKV.

The protein belongs to the NhaA Na(+)/H(+) (TC 2.A.33) antiporter family.

The protein localises to the cell inner membrane. It carries out the reaction Na(+)(in) + 2 H(+)(out) = Na(+)(out) + 2 H(+)(in). Na(+)/H(+) antiporter that extrudes sodium in exchange for external protons. The polypeptide is Na(+)/H(+) antiporter NhaA (Shewanella loihica (strain ATCC BAA-1088 / PV-4)).